The chain runs to 395 residues: Probable eukaryotic translation initiation factor 5 (395 aa).

28 to 35 (GKGNGIKT) lines the GTP pocket. Disordered regions lie at residues 146 to 171 (PPAK…AEDE) and 374 to 395 (LAEA…DDDE). The span at 147–157 (PAKKKSHKHKR) shows a compositional bias: basic residues. Composition is skewed to acidic residues over residues 161-170 (VAEEEDGAED) and 377-395 (ASDE…DDDE). Positions 228–384 (EEAESSRYDQ…AEASDESESE (157 aa)) constitute a W2 domain.

This sequence belongs to the eIF-2-beta/eIF-5 family. As to quaternary structure, monomer.

In terms of biological role, catalyzes the hydrolysis of GTP bound to the 40S ribosomal initiation complex (40S.mRNA.Met-tRNA[F].eIF-2.GTP) with the subsequent joining of a 60S ribosomal subunit resulting in the release of eIF-2 and the guanine nucleotide. The subsequent joining of a 60S ribosomal subunit results in the formation of a functional 80S initiation complex (80S.mRNA.Met-tRNA[F]). This is Probable eukaryotic translation initiation factor 5 (tif5) from Schizosaccharomyces pombe (strain 972 / ATCC 24843) (Fission yeast).